A 662-amino-acid polypeptide reads, in one-letter code: Biosynthetic arginine decarboxylase (662 aa).

Lys127 is modified (N6-(pyridoxal phosphate)lysine). 307 to 317 (FDVGGGLGVDY) contributes to the substrate binding site.

It belongs to the Orn/Lys/Arg decarboxylase class-II family. SpeA subfamily. Homotetramer. Mg(2+) serves as cofactor. It depends on pyridoxal 5'-phosphate as a cofactor.

The protein resides in the periplasm. The catalysed reaction is L-arginine + H(+) = agmatine + CO2. It participates in amine and polyamine biosynthesis; agmatine biosynthesis; agmatine from L-arginine: step 1/1. In terms of biological role, catalyzes the biosynthesis of agmatine from arginine. The sequence is that of Biosynthetic arginine decarboxylase from Shigella flexneri.